The chain runs to 234 residues: Uridylate kinase (234 aa).

9–12 (KLSG) contributes to the ATP binding site. Gly-51 is a binding site for UMP. Positions 52 and 56 each coordinate ATP. UMP is bound by residues Asp-71 and 132–139 (CGNPFFTT). ATP is bound by residues Thr-159, Tyr-165, and Asp-168.

Belongs to the UMP kinase family. In terms of assembly, homohexamer.

It is found in the cytoplasm. The enzyme catalyses UMP + ATP = UDP + ADP. It functions in the pathway pyrimidine metabolism; CTP biosynthesis via de novo pathway; UDP from UMP (UMPK route): step 1/1. With respect to regulation, inhibited by UTP. Functionally, catalyzes the reversible phosphorylation of UMP to UDP. The chain is Uridylate kinase from Prochlorococcus marinus (strain MIT 9301).